Reading from the N-terminus, the 453-residue chain is MALPNKFFLWFCCFAWLCFPISLDSQPSRGEAQIVARTALESEAETWSLLKHLDGRHRPGLLSPLLNVLYDGHREPPRLQPDDRALSYMKRLYKAYATKEGTPKSNRSHLYNTVRLFTPCAQHKQAPGDQAAGTLPSVDLLFNLDRVTVVEHLFKSVLLYTFNNSISFPFPVKCICNLVIKEPEFSSKTLPRAPYSFTFNSQFEFRKKYKWIEIDVTAPLEPLVASHKRNIHMSVNFTCVKDQLQHPSARDSLFNMTLLLAPSLLLYLNDTSAQAFHRWHSLHPKRKPSQDPDQKRGLSACPMGEEAAEGVRLSRHRRDQESVSSELKKPLVPASFNLSEYFKQFLFPQNECELHDFRLSFSQLKWDNWIVAPHKYNPRYCKGDCPRAVGHRYGSPVHTMVMNIIHEKLDSSVPRPSCVPAKYSPLSVLAIEPDGSIAYKEYEDMIATKCTCR.

Positions 1 to 25 (MALPNKFFLWFCCFAWLCFPISLDS) are cleaved as a signal peptide. Positions 26–318 (QPSRGEAQIV…EGVRLSRHRR (293 aa)) are excised as a propeptide. N-linked (GlcNAc...) asparagine glycans are attached at residues Asn106, Asn163, Asn236, Asn255, and Asn269. Positions 281–300 (SLHPKRKPSQDPDQKRGLSA) are disordered. Asn337 is a glycosylation site (N-linked (GlcNAc...) asparagine). Intrachain disulfides connect Cys352–Cys418, Cys381–Cys450, and Cys385–Cys452.

The protein belongs to the TGF-beta family. As to quaternary structure, homodimer or heterodimer (Potential). But, in contrast to other members of this family, cannot be disulfide-linked. In terms of processing, phosphorylated; phosphorylation is critical for GDF9 function.

The protein localises to the secreted. Its function is as follows. Required for ovarian folliculogenesis. The sequence is that of Growth/differentiation factor 9 (GDF9) from Bos taurus (Bovine).